Reading from the N-terminus, the 109-residue chain is Cell division suppressor protein YneA (109 aa).

The 52-residue stretch at 39–90 (SEVNVNEGDSLWALADQYAGKSDMAKADFVSWVEKENNLSDGHVEAGDSVVI) folds into the LysM domain.

The protein belongs to the YneA family.

The protein localises to the cytoplasm. Inhibits cell division during the SOS response. Affects a later stage of the cell division protein assembly, after the assembly of the Z ring, by probably suppressing recruitment of FtsL and/or DivIC to the division machinery. The polypeptide is Cell division suppressor protein YneA (Listeria monocytogenes serovar 1/2a (strain ATCC BAA-679 / EGD-e)).